A 49-amino-acid chain; its full sequence is Large ribosomal subunit protein bL33 (49 aa).

This sequence belongs to the bacterial ribosomal protein bL33 family.

This Lactiplantibacillus plantarum (strain ATCC BAA-793 / NCIMB 8826 / WCFS1) (Lactobacillus plantarum) protein is Large ribosomal subunit protein bL33.